Here is a 75-residue protein sequence, read N- to C-terminus: Conotoxin TsMEKL-011 (75 aa).

An N-terminal signal peptide occupies residues 1 to 19 (MEKLTILLLVAAVLMSTQA). Residues 20-45 (LIQRGGAKRRKVNFFSIREPGAEDWR) constitute a propeptide that is removed on maturation. 3 cysteine pairs are disulfide-bonded: C49/C63, C56/C67, and C62/C71.

It belongs to the conotoxin O2 superfamily. As to expression, expressed by the venom duct.

The protein resides in the secreted. The polypeptide is Conotoxin TsMEKL-011 (Conus tessulatus (Tessellate cone)).